An 87-amino-acid chain; its full sequence is Small ribosomal subunit protein bS20 (87 aa).

A disordered region spans residues 1–25 (MANIKSAKKRAVQSEKRRKHNASRR).

It belongs to the bacterial ribosomal protein bS20 family.

Binds directly to 16S ribosomal RNA. In Yersinia pseudotuberculosis serotype O:1b (strain IP 31758), this protein is Small ribosomal subunit protein bS20.